The chain runs to 280 residues: Eukaryotic translation initiation factor 3 subunit F-1 (280 aa).

Residues Val8–Gly138 form the MPN domain.

The protein belongs to the eIF-3 subunit F family. As to quaternary structure, component of the eukaryotic translation initiation factor 3 (eIF-3) complex. The eIF-3 complex interacts with pix.

The protein resides in the cytoplasm. In terms of biological role, component of the eukaryotic translation initiation factor 3 (eIF-3) complex, which is involved in protein synthesis of a specialized repertoire of mRNAs and, together with other initiation factors, stimulates binding of mRNA and methionyl-tRNAi to the 40S ribosome. The eIF-3 complex specifically targets and initiates translation of a subset of mRNAs involved in cell proliferation. In Drosophila willistoni (Fruit fly), this protein is Eukaryotic translation initiation factor 3 subunit F-1.